A 100-amino-acid chain; its full sequence is Large ribosomal subunit protein uL23 (100 aa).

It belongs to the universal ribosomal protein uL23 family. In terms of assembly, part of the 50S ribosomal subunit. Contacts protein L29, and trigger factor when it is bound to the ribosome.

In terms of biological role, one of the early assembly proteins it binds 23S rRNA. One of the proteins that surrounds the polypeptide exit tunnel on the outside of the ribosome. Forms the main docking site for trigger factor binding to the ribosome. The polypeptide is Large ribosomal subunit protein uL23 (Prochlorococcus marinus (strain AS9601)).